The sequence spans 372 residues: 4-hydroxy-3-methylbut-2-en-1-yl diphosphate synthase (flavodoxin) (372 aa).

Cys-270, Cys-273, Cys-305, and Glu-312 together coordinate [4Fe-4S] cluster.

This sequence belongs to the IspG family. The cofactor is [4Fe-4S] cluster.

The catalysed reaction is (2E)-4-hydroxy-3-methylbut-2-enyl diphosphate + oxidized [flavodoxin] + H2O + 2 H(+) = 2-C-methyl-D-erythritol 2,4-cyclic diphosphate + reduced [flavodoxin]. The protein operates within isoprenoid biosynthesis; isopentenyl diphosphate biosynthesis via DXP pathway; isopentenyl diphosphate from 1-deoxy-D-xylulose 5-phosphate: step 5/6. In terms of biological role, converts 2C-methyl-D-erythritol 2,4-cyclodiphosphate (ME-2,4cPP) into 1-hydroxy-2-methyl-2-(E)-butenyl 4-diphosphate. This Vibrio campbellii (strain ATCC BAA-1116) protein is 4-hydroxy-3-methylbut-2-en-1-yl diphosphate synthase (flavodoxin).